Reading from the N-terminus, the 352-residue chain is Chorismate synthase (352 aa).

Residues R48 and R54 each coordinate NADP(+). FMN contacts are provided by residues R125 to S127, N238 to A239, G278, K293 to S297, and R319.

It belongs to the chorismate synthase family. As to quaternary structure, homotetramer. The cofactor is FMNH2.

It carries out the reaction 5-O-(1-carboxyvinyl)-3-phosphoshikimate = chorismate + phosphate. It functions in the pathway metabolic intermediate biosynthesis; chorismate biosynthesis; chorismate from D-erythrose 4-phosphate and phosphoenolpyruvate: step 7/7. In terms of biological role, catalyzes the anti-1,4-elimination of the C-3 phosphate and the C-6 proR hydrogen from 5-enolpyruvylshikimate-3-phosphate (EPSP) to yield chorismate, which is the branch point compound that serves as the starting substrate for the three terminal pathways of aromatic amino acid biosynthesis. This reaction introduces a second double bond into the aromatic ring system. This chain is Chorismate synthase, found in Bordetella avium (strain 197N).